Consider the following 50-residue polypeptide: Insulin 2 (50 aa).

Cystine bridges form between Cys-8–Cys-36, Cys-20–Cys-49, and Cys-35–Cys-40.

It belongs to the insulin family. Heterodimer of a B chain and an A chain linked by two disulfide bonds.

It is found in the secreted. Its function is as follows. Insulin decreases blood glucose concentration. It increases cell permeability to monosaccharides, amino acids and fatty acids. It accelerates glycolysis, the pentose phosphate cycle, and glycogen synthesis in liver. The polypeptide is Insulin 2 (ins2) (Batrachoididae sp. (Toadfish)).